The following is a 196-amino-acid chain: Holliday junction branch migration complex subunit RuvA (196 aa).

A domain I region spans residues 1-63 (MYDYIKGTLV…DDAHLLFGFH (63 aa)). The domain II stretch occupies residues 64–142 (TEDEKEVFLK…ELPAETTNTT (79 aa)). The segment at 143–146 (ANQT) is flexible linker. The domain III stretch occupies residues 147 to 196 (AGNQQLDEAMEALLALGYKSTELKKVKAFFEDTNETAEQYIKSALKMLMK).

Belongs to the RuvA family. In terms of assembly, homotetramer. Forms an RuvA(8)-RuvB(12)-Holliday junction (HJ) complex. HJ DNA is sandwiched between 2 RuvA tetramers; dsDNA enters through RuvA and exits via RuvB. An RuvB hexamer assembles on each DNA strand where it exits the tetramer. Each RuvB hexamer is contacted by two RuvA subunits (via domain III) on 2 adjacent RuvB subunits; this complex drives branch migration. In the full resolvosome a probable DNA-RuvA(4)-RuvB(12)-RuvC(2) complex forms which resolves the HJ.

Its subcellular location is the cytoplasm. Its function is as follows. The RuvA-RuvB-RuvC complex processes Holliday junction (HJ) DNA during genetic recombination and DNA repair, while the RuvA-RuvB complex plays an important role in the rescue of blocked DNA replication forks via replication fork reversal (RFR). RuvA specifically binds to HJ cruciform DNA, conferring on it an open structure. The RuvB hexamer acts as an ATP-dependent pump, pulling dsDNA into and through the RuvAB complex. HJ branch migration allows RuvC to scan DNA until it finds its consensus sequence, where it cleaves and resolves the cruciform DNA. The chain is Holliday junction branch migration complex subunit RuvA from Streptococcus thermophilus (strain CNRZ 1066).